A 132-amino-acid polypeptide reads, in one-letter code: ATP synthase epsilon chain 1 (132 aa).

The protein belongs to the ATPase epsilon chain family. In terms of assembly, F-type ATPases have 2 components, CF(1) - the catalytic core - and CF(0) - the membrane proton channel. CF(1) has five subunits: alpha(3), beta(3), gamma(1), delta(1), epsilon(1). CF(0) has three main subunits: a, b and c.

It is found in the cell inner membrane. In terms of biological role, produces ATP from ADP in the presence of a proton gradient across the membrane. This chain is ATP synthase epsilon chain 1, found in Cereibacter sphaeroides (strain ATCC 17023 / DSM 158 / JCM 6121 / CCUG 31486 / LMG 2827 / NBRC 12203 / NCIMB 8253 / ATH 2.4.1.) (Rhodobacter sphaeroides).